The primary structure comprises 508 residues: Dihydroniloticin synthase CYP71CD4 (508 aa).

Residues 6–26 (LDFFSVTSFIIFFLFLFRLVW) traverse the membrane as a helical segment. Heme is bound at residue Cys449.

Belongs to the cytochrome P450 family. Requires heme as cofactor. In terms of tissue distribution, mainly expressed in roots and, to a lesser extent, in stems.

It is found in the membrane. The enzyme catalyses tirucalla-7,24-dien-3beta-ol + 2 reduced [NADPH--hemoprotein reductase] + 2 O2 = dihydroniloticin + 2 oxidized [NADPH--hemoprotein reductase] + 2 H2O + 2 H(+). It functions in the pathway secondary metabolite biosynthesis; terpenoid biosynthesis. Functionally, monooxygenase involved in the biosynthesis of quassinoids triterpene natural products such as ailanthone, chaparrinone, glaucarubinone and amarolide, allelopathic degraded triterpene lactones inhibiting the growth of other plants, and possessing antimalarial, antifeedant, insecticidal, anti-inflammatory and anticancer activities. Catalyzes the conversion of tirucalladienol to dihydroniloticin. The sequence is that of Dihydroniloticin synthase CYP71CD4 from Ailanthus altissima (Tree-of-heaven).